Consider the following 305-residue polypeptide: Tyrosine recombinase XerC (305 aa).

The 92-residue stretch at 4 to 95 folds into the Core-binding (CB) domain; it reads TSIQALINKW…AVKNFYRFLE (92 aa). One can recognise a Tyr recombinase domain in the interval 116–298; that stretch reads LLPKALSEDD…SIKHLEAVYT (183 aa). Catalysis depends on residues arginine 159, lysine 182, histidine 250, arginine 253, and histidine 276. The active-site O-(3'-phospho-DNA)-tyrosine intermediate is tyrosine 285.

This sequence belongs to the 'phage' integrase family. XerC subfamily. As to quaternary structure, forms a cyclic heterotetrameric complex composed of two molecules of XerC and two molecules of XerD.

It localises to the cytoplasm. In terms of biological role, site-specific tyrosine recombinase, which acts by catalyzing the cutting and rejoining of the recombining DNA molecules. The XerC-XerD complex is essential to convert dimers of the bacterial chromosome into monomers to permit their segregation at cell division. It also contributes to the segregational stability of plasmids. This chain is Tyrosine recombinase XerC, found in Rickettsia conorii (strain ATCC VR-613 / Malish 7).